We begin with the raw amino-acid sequence, 859 residues long: Envelope glycoprotein gp160 (859 aa).

Positions Met1–Tyr24 are cleaved as a signal peptide. The Extracellular portion of the chain corresponds to Val25 to Tyr673. Asn36 carries an N-linked (GlcNAc...) asparagine; by host glycan. The cysteines at positions 43 and 56 are disulfide-linked. 26 N-linked (GlcNAc...) asparagine; by host glycosylation sites follow: Asn69, Asn78, Asn113, Asn119, Asn131, Asn137, Asn145, Asn160, Asn173, Asn186, Asn200, Asn232, Asn235, Asn242, Asn266, Asn272, Asn283, Asn294, Asn304, Asn359, Asn392, Asn402, Asn405, Asn442, Asn457, and Asn460. 5 disulfides stabilise this stretch: Cys100-Cys208, Cys107-Cys199, Cys112-Cys157, Cys221-Cys251, and Cys231-Cys243. A V1 region spans residues Cys112–Asp156. The interval Cys157–Cys199 is V2. Residues Cys299–Trp331 are V3. Cys299 and Cys332 are oxidised to a cystine. 2 disulfide bridges follow: Cys384-Cys441 and Cys391-Cys414. The tract at residues Cys391–Cys414 is V4. The interval Asn457–Phe463 is V5. The interval Gly506–Ala526 is fusion peptide. The tract at residues Leu569–Gln585 is immunosuppression. Asn605, Asn614, and Asn630 each carry an N-linked (GlcNAc...) asparagine; by host glycan. Residues Asn614–Met646 are a coiled coil. Residues Lys651 to Gln672 are MPER; binding to GalCer. Residues Gly674–Leu694 traverse the membrane as a helical segment. The Cytoplasmic portion of the chain corresponds to Ser695 to Leu859. The short motif at Tyr701 to Val704 is the YXXV motif; contains endocytosis signal element. A lipid anchor (S-palmitoyl cysteine; by host) is attached at Cys767. Residues Leu858 to Leu859 carry the Di-leucine internalization motif motif.

In terms of assembly, the mature envelope protein (Env) consists of a homotrimer of non-covalently associated gp120-gp41 heterodimers. The resulting complex protrudes from the virus surface as a spike. There seems to be as few as 10 spikes on the average virion. Interacts with human CD4, CCR5 and CXCR4, to form a P4HB/PDI-CD4-CXCR4-gp120 complex. Gp120 also interacts with the C-type lectins CD209/DC-SIGN and CLEC4M/DC-SIGNR (collectively referred to as DC-SIGN(R)). Gp120 and gp41 interact with GalCer. The mature envelope protein (Env) consists of a homotrimer of non-covalently associated gp120-gp41 heterodimers. The resulting complex protrudes from the virus surface as a spike. There seems to be as few as 10 spikes on the average virion. In terms of processing, specific enzymatic cleavages in vivo yield mature proteins. Envelope glycoproteins are synthesized as an inactive precursor that is heavily N-glycosylated and processed likely by host cell furin in the Golgi to yield the mature SU and TM proteins. The cleavage site between SU and TM requires the minimal sequence [KR]-X-[KR]-R. Post-translationally, palmitoylation of the transmembrane protein and of Env polyprotein (prior to its proteolytic cleavage) is essential for their association with host cell membrane lipid rafts. Palmitoylation is therefore required for envelope trafficking to classical lipid rafts, but not for viral replication.

The protein resides in the virion membrane. It localises to the host cell membrane. Its subcellular location is the host endosome membrane. Its function is as follows. The surface protein gp120 (SU) attaches the virus to the host lymphoid cell by binding to the primary receptor CD4. This interaction induces a structural rearrangement creating a high affinity binding site for a chemokine coreceptor like CXCR4 and/or CCR5. This peculiar 2 stage receptor-interaction strategy allows gp120 to maintain the highly conserved coreceptor-binding site in a cryptic conformation, protected from neutralizing antibodies. Since CD4 also displays a binding site for the disulfide-isomerase P4HB/PDI, a P4HB/PDI-CD4-CXCR4-gp120 complex may form. In that complex, P4HB/PDI could reach and reduce gp120 disulfide bonds, causing major conformational changes in gp120. TXN, another PDI family member could also be involved in disulfide rearrangements in Env during fusion. These changes are transmitted to the transmembrane protein gp41 and are thought to activate its fusogenic potential by unmasking its fusion peptide. The surface protein gp120 is a ligand for CD209/DC-SIGN and CLEC4M/DC-SIGNR, which are respectively found on dendritic cells (DCs), and on endothelial cells of liver sinusoids and lymph node sinuses. These interactions allow capture of viral particles at mucosal surfaces by these cells and subsequent transmission to permissive cells. DCs are professional antigen presenting cells, critical for host immunity by inducing specific immune responses against a broad variety of pathogens. They act as sentinels in various tissues where they take up antigen, process it, and present it to T-cells following migration to lymphoid organs. HIV subverts the migration properties of dendritic cells to gain access to CD4+ T-cells in lymph nodes. Virus transmission to permissive T-cells occurs either in trans (without DCs infection, through viral capture and transmission), or in cis (following DCs productive infection, through the usual CD4-gp120 interaction), thereby inducing a robust infection. In trans infection, bound virions remain infectious over days and it is proposed that they are not degraded, but protected in non-lysosomal acidic organelles within the DCs close to the cell membrane thus contributing to the viral infectious potential during DCs' migration from the periphery to the lymphoid tissues. On arrival at lymphoid tissues, intact virions recycle back to DCs' cell surface allowing virus transmission to CD4+ T-cells. Virion capture also seems to lead to MHC-II-restricted viral antigen presentation, and probably to the activation of HIV-specific CD4+ cells. In terms of biological role, the transmembrane protein gp41 (TM) acts as a class I viral fusion protein. Under the current model, the protein has at least 3 conformational states: pre-fusion native state, pre-hairpin intermediate state, and post-fusion hairpin state. During fusion of viral and target intracellular membranes, the coiled coil regions (heptad repeats) assume a trimer-of-hairpins structure, positioning the fusion peptide in close proximity to the C-terminal region of the ectodomain. The formation of this structure appears to drive apposition and subsequent fusion of viral and target cell membranes. Complete fusion occurs in host cell endosomes and is dynamin-dependent, however some lipid transfer might occur at the plasma membrane. The virus undergoes clathrin-dependent internalization long before endosomal fusion, thus minimizing the surface exposure of conserved viral epitopes during fusion and reducing the efficacy of inhibitors targeting these epitopes. Membranes fusion leads to delivery of the nucleocapsid into the cytoplasm. Functionally, the envelope glycoprotein gp160 precursor down-modulates cell surface CD4 antigen by interacting with it in the endoplasmic reticulum and blocking its transport to the cell surface. Its function is as follows. The gp120-gp41 heterodimer seems to contribute to T-cell depletion during HIV-1 infection. The envelope glycoproteins expressed on the surface of infected cells induce apoptosis through an interaction with uninfected cells expressing the receptor (CD4) and the coreceptors CXCR4 or CCR5. This type of bystander killing may be obtained by at least three distinct mechanisms. First, the interaction between the 2 cells can induce cellular fusion followed by nuclear fusion within the syncytium. Syncytia are condemned to die from apoptosis. Second, the 2 interacting cells may not fuse entirely and simply exchange plasma membrane lipids, after a sort of hemifusion process, followed by rapid death. Third, it is possible that virus-infected cells, on the point of undergoing apoptosis, fuse with CD4-expressing cells, in which case apoptosis is rapidly transmitted from one cell to the other and thus occurs in a sort of contagious fashion. The gp120-gp41 heterodimer allows rapid transcytosis of the virus through CD4 negative cells such as simple epithelial monolayers of the intestinal, rectal and endocervical epithelial barriers. Both gp120 and gp41 specifically recognize glycosphingolipids galactosyl-ceramide (GalCer) or 3' sulfo-galactosyl-ceramide (GalS) present in the lipid rafts structures of epithelial cells. Binding to these alternative receptors allows the rapid transcytosis of the virus through the epithelial cells. This transcytotic vesicle-mediated transport of virions from the apical side to the basolateral side of the epithelial cells does not involve infection of the cells themselves. The chain is Envelope glycoprotein gp160 (env) from Homo sapiens (Human).